The primary structure comprises 382 residues: Alpha-2B adrenergic receptor (382 aa).

A helical transmembrane segment spans residues 1–25; sequence AIAAVITFLILFTIFGNALVILAVL. Residues 26 to 36 are Cytoplasmic-facing; sequence TSRSLRAPQNL. The helical transmembrane segment at 37–62 threads the bilayer; that stretch reads FLVSLAAADILVATLIIPFSLANELL. Topologically, residues 63-72 are extracellular; the sequence is GYWYFRHTWC. The cysteines at positions 72 and 151 are disulfide-linked. A helical membrane pass occupies residues 73 to 95; sequence EVYLALDVLFCTSSIVHLCAISL. Residues 96 to 117 lie on the Cytoplasmic side of the membrane; sequence DRYWSVSRALEYNSKRTPRRIK. Residues 118–140 traverse the membrane as a helical segment; the sequence is GIILTVWLIAAFISLPPLIYKGD. The Extracellular segment spans residues 141 to 156; the sequence is KGKKPGGRPQCKLNEE. A helical membrane pass occupies residues 157 to 180; it reads AWYILSSSIGSFFAPCLIMILVYL. Topologically, residues 181–346 are cytoplasmic; that stretch reads RIYLIAKRRN…MNREKRFTFV (166 aa). A disordered region spans residues 192 to 305; it reads QGPHGKQAPG…QGTPNFQPSQ (114 aa). Residues 271 to 284 are compositionally biased toward acidic residues; sequence EEEEEEEEEEEEEC. The span at 291–305 shows a compositional bias: polar residues; that stretch reads TSSSLQGTPNFQPSQ. A helical transmembrane segment spans residues 347–370; sequence LAVVIGVFVLCWFPFFFSYSLGAI. The Extracellular portion of the chain corresponds to 371-379; the sequence is CPQHCKVPH. The chain crosses the membrane as a helical span at residues 380 to 382; that stretch reads GLF.

Belongs to the G-protein coupled receptor 1 family. Adrenergic receptor subfamily. ADRA2B sub-subfamily. In terms of assembly, interacts with RAB26. Interacts with PPP1R9B. Interacts with GGA1, GGA2 and GGA3.

The protein localises to the cell membrane. Functionally, alpha-2 adrenergic receptors mediate the catecholamine-induced inhibition of adenylate cyclase through the action of G proteins. This chain is Alpha-2B adrenergic receptor (ADRA2B), found in Didelphis virginiana (North American opossum).